The following is a 439-amino-acid chain: Ectonucleotide pyrophosphatase/phosphodiesterase family member 7 (439 aa).

Residues 1-21 (MGHSAVLLCVALAILPACVTG) form the signal peptide. Residues 22–414 (APVQRQHKLL…ILRPMLRSGS (393 aa)) are Extracellular-facing. Residues Asp-36 and Thr-72 each coordinate Zn(2+). The tract at residues 69–75 (VTMTSPC) is required for enzyme activity. The active-site Nucleophile is Thr-72. Asn-93 is a binding site for substrate. 4 N-linked (GlcNAc...) asparagine glycosylation sites follow: Asn-97, Asn-118, Asn-143, and Asn-165. Positions 196, 200, 243, and 244 each coordinate Zn(2+). Asn-264 carries an N-linked (GlcNAc...) asparagine glycan. A Zn(2+)-binding site is contributed by His-350. Residues 415 to 435 (ASLLSSQHHLVALLVGILTCL) traverse the membrane as a helical segment. At 436–439 (AKVL) the chain is on the cytoplasmic side.

The cofactor is Zn(2+). Post-translationally, N-glycosylated; required for activity and transport to the plasma membrane. In terms of tissue distribution, expressed in liver and small intestine.

It is found in the cell membrane. The catalysed reaction is a sphingomyelin + H2O = phosphocholine + an N-acylsphing-4-enine + H(+). The enzyme catalyses a 1-O-alkyl-2-acetyl-sn-glycero-3-phosphocholine + H2O = a 1-O-alkyl-2-acetyl-sn-glycerol + phosphocholine + H(+). It carries out the reaction 1-O-octadecyl-2-acetyl-sn-glycero-3-phosphocholine + H2O = 1-O-octadecyl-2-acetyl-sn-glycerol + phosphocholine + H(+). It catalyses the reaction 1-hexadecanoyl-sn-glycero-3-phosphocholine + H2O = 1-hexadecanoyl-sn-glycerol + phosphocholine + H(+). Functionally, choline-specific phosphodiesterase that hydrolyzes sphingomyelin releasing the ceramide and phosphocholine and therefore is involved in sphingomyelin digestion, ceramide formation, and fatty acid (FA) absorption in the gastrointestinal tract. Also has phospholipase C activity and can also cleave phosphocholine from palmitoyl lyso-phosphatidylcholine and platelet-activating factor (PAF) leading to its inactivation. Does not have nucleotide pyrophosphatase activity. May promote cholesterol absorption by affecting the levels of sphingomyelin derived from either diet or endogenous sources, in the intestinal lumen. The protein is Ectonucleotide pyrophosphatase/phosphodiesterase family member 7 of Mus musculus (Mouse).